Reading from the N-terminus, the 467-residue chain is Ribulose bisphosphate carboxylase large chain (467 aa).

At Lys-5 the chain carries N6,N6,N6-trimethyllysine. Residues Asn-114 and Thr-164 each contribute to the substrate site. The active-site Proton acceptor is the Lys-166. Lys-168 provides a ligand contact to substrate. The Mg(2+) site is built by Lys-192, Asp-194, and Glu-195. The residue at position 192 (Lys-192) is an N6-carboxylysine. The active-site Proton acceptor is His-285. Substrate contacts are provided by Arg-286, His-318, and Ser-370.

It belongs to the RuBisCO large chain family. Type I subfamily. In terms of assembly, heterohexadecamer of 8 large chains and 8 small chains; disulfide-linked. The disulfide link is formed within the large subunit homodimers. Mg(2+) serves as cofactor. Post-translationally, the disulfide bond which can form in the large chain dimeric partners within the hexadecamer appears to be associated with oxidative stress and protein turnover.

The protein localises to the plastid. The protein resides in the chloroplast. It carries out the reaction 2 (2R)-3-phosphoglycerate + 2 H(+) = D-ribulose 1,5-bisphosphate + CO2 + H2O. The catalysed reaction is D-ribulose 1,5-bisphosphate + O2 = 2-phosphoglycolate + (2R)-3-phosphoglycerate + 2 H(+). Functionally, ruBisCO catalyzes two reactions: the carboxylation of D-ribulose 1,5-bisphosphate, the primary event in carbon dioxide fixation, as well as the oxidative fragmentation of the pentose substrate in the photorespiration process. Both reactions occur simultaneously and in competition at the same active site. The protein is Ribulose bisphosphate carboxylase large chain of Tasmannia insipida (Pepperbush).